Consider the following 174-residue polypeptide: Gamma-crystallin E (174 aa).

Beta/gamma crystallin 'Greek key' domains lie at glycine 2–serine 40 and glycine 41–proline 83. Residues histidine 84 to serine 87 form a connecting peptide region. Beta/gamma crystallin 'Greek key' domains follow at residues histidine 88 to glutamate 128 and glycine 129 to methionine 171.

This sequence belongs to the beta/gamma-crystallin family. As to expression, detected in the superior olivary complex of the auditory hindbrain.

In terms of biological role, crystallins are the dominant structural components of the vertebrate eye lens. This Mus musculus (Mouse) protein is Gamma-crystallin E (Cryge).